Consider the following 639-residue polypeptide: tRNA uridine 5-carboxymethylaminomethyl modification enzyme MnmG (639 aa).

15–20 (GAGHAG) provides a ligand contact to FAD. An NAD(+)-binding site is contributed by 276 to 290 (GPRYCPSIEDKIVRF).

It belongs to the MnmG family. Homodimer. Heterotetramer of two MnmE and two MnmG subunits. It depends on FAD as a cofactor.

The protein localises to the cytoplasm. Functionally, NAD-binding protein involved in the addition of a carboxymethylaminomethyl (cmnm) group at the wobble position (U34) of certain tRNAs, forming tRNA-cmnm(5)s(2)U34. The polypeptide is tRNA uridine 5-carboxymethylaminomethyl modification enzyme MnmG (Streptococcus gordonii (strain Challis / ATCC 35105 / BCRC 15272 / CH1 / DL1 / V288)).